The sequence spans 605 residues: Protein ZRG17 (605 aa).

Over 1–225 (METPQMNAIQ…DLLSNLPWPK (225 aa)) the chain is Cytoplasmic. Phosphoserine occurs at positions 16 and 131. Residues 118–178 (PAPKLVPPPP…PSSAASRTSF (61 aa)) form a disordered region. The segment covering 143 to 176 (SKRSSMTLDSPFNFTTSTLQPHQQTPPSSAASRT) has biased composition (polar residues). Residues 226–246 (AYIQLSIAALQIFACLITFQV) form a helical membrane-spanning segment. Over 247–254 (GHLYSWSN) the chain is Lumenal. A helical transmembrane segment spans residues 255–275 (FITLSHFITYDIIGSLVIIFV). The Cytoplasmic segment spans residues 276–287 (ENLSQFQVWFTG). Residues 288–308 (TITFPFGLNRIDVLLSFALAV) form a helical membrane-spanning segment. Residue serine 309 is a topological domain, lumenal. Residues 310–330 (LCFVGLDLLFHIIEEFIVLFV) form a helical membrane-spanning segment. Residues 331–363 (ESGSSLTNNHDHDEINEQIPHSHIANANDSQNE) are Cytoplasmic-facing. A helical transmembrane segment spans residues 364-384 (NITLWYSILMINLVLSTLSLY). Over 385-399 (KTFYANKYSNLKTKN) the chain is Lumenal. A helical transmembrane segment spans residues 400–420 (PIITITYTAYLFIYPLLLDLL). Residues 421–422 (SS) lie on the Cytoplasmic side of the membrane. The helical transmembrane segment at 423–443 (ISDYLATLVISSLILWHGLTI) threads the bilayer. Residues 444 to 545 (ARWTSTVLLM…ERLSEFKSRY (102 aa)) are Lumenal-facing. The span at 473–482 (DTTAHTQQVE) shows a compositional bias: polar residues. The segment at 473 to 497 (DTTAHTQQVESKAAKEKPSVRPRSM) is disordered. Serine 498 is subject to Phosphoserine. The chain crosses the membrane as a helical span at residues 546 to 566 (ILNYDDIVISKVNFTLYVVLI). Residues 567–605 (KITMKGGSDDDELMLRLAIDKCIQTSIPTCETTIDIDRI) are Cytoplasmic-facing.

The protein localises to the endoplasmic reticulum membrane. The polypeptide is Protein ZRG17 (ZRG17) (Saccharomyces cerevisiae (strain ATCC 204508 / S288c) (Baker's yeast)).